A 371-amino-acid chain; its full sequence is Probable alcohol acetyltransferase (371 aa).

Active-site charge relay system residues include Ser124 and His295. A disordered region spans residues 325–352; it reads AKALEESPKESYSRPPAHQQPLHKNDFT. The segment covering 327 to 336 has biased composition (basic and acidic residues); sequence ALEESPKESY.

The protein belongs to the AB hydrolase superfamily.

Probable alcohol acetyltransferase that uses acetyl-CoA to synthesize acetate esters from various alcohols. Not involved in the synthesis of ethyl acetate. The polypeptide is Probable alcohol acetyltransferase (EAT2) (Cyberlindnera fabianii (Yeast)).